A 250-amino-acid polypeptide reads, in one-letter code: Hydroxyacylglutathione hydrolase (250 aa).

7 residues coordinate Zn(2+): H52, H54, D56, H57, H107, D128, and H166.

It belongs to the metallo-beta-lactamase superfamily. Glyoxalase II family. In terms of assembly, monomer. Zn(2+) is required as a cofactor.

It carries out the reaction an S-(2-hydroxyacyl)glutathione + H2O = a 2-hydroxy carboxylate + glutathione + H(+). Its pathway is secondary metabolite metabolism; methylglyoxal degradation; (R)-lactate from methylglyoxal: step 2/2. In terms of biological role, thiolesterase that catalyzes the hydrolysis of S-D-lactoyl-glutathione to form glutathione and D-lactic acid. The chain is Hydroxyacylglutathione hydrolase from Neisseria meningitidis serogroup A / serotype 4A (strain DSM 15465 / Z2491).